Reading from the N-terminus, the 129-residue chain is Putative zinc finger protein 702 (129 aa).

3 C2H2-type zinc fingers span residues 34 to 56 (YKCD…HRCH), 62 to 84 (YKCN…KAIH), and 90 to 112 (HKCN…HRLH).

The protein belongs to the krueppel C2H2-type zinc-finger protein family.

It localises to the nucleus. Its function is as follows. May be involved in transcriptional regulation. The protein is Putative zinc finger protein 702 (ZNF702P) of Homo sapiens (Human).